Consider the following 498-residue polypeptide: Hyaluronan-mediated motility receptor (498 aa).

Positions 150–331 (EEMTSERNVF…ITDLQNQLRQ (182 aa)) are required for interaction with FAM83D. N-linked (GlcNAc...) asparagine glycosylation is found at asparagine 262 and asparagine 302. 2 hyaluronic acid-binding regions span residues 420-430 (KQKIKHVVKLK) and 442-451 (KLRSQLAKRK). An N-linked (GlcNAc...) asparagine glycan is attached at asparagine 483. Residue threonine 488 is modified to Phosphothreonine.

Interacts with ANKRD26. Interacts with DYNLL1. Interacts with FAM83D/CHICA.

Its subcellular location is the cell surface. It is found in the cytoplasm. It localises to the cytoskeleton. The protein resides in the spindle. Functionally, receptor for hyaluronic acid (HA). Involved in cell motility. When hyaluronan binds to HMMR, the phosphorylation of a number of proteins, including the PTK2/FAK1 occurs. May also be involved in cellular transformation and metastasis formation, and in regulating extracellular-regulated kinase (ERK) activity. May act as a regulator of adipogenisis. This chain is Hyaluronan-mediated motility receptor (Hmmr), found in Rattus norvegicus (Rat).